Consider the following 447-residue polypeptide: Na(+)-translocating NADH-quinone reductase subunit A (447 aa).

Belongs to the NqrA family. Composed of six subunits; NqrA, NqrB, NqrC, NqrD, NqrE and NqrF.

The enzyme catalyses a ubiquinone + n Na(+)(in) + NADH + H(+) = a ubiquinol + n Na(+)(out) + NAD(+). NQR complex catalyzes the reduction of ubiquinone-1 to ubiquinol by two successive reactions, coupled with the transport of Na(+) ions from the cytoplasm to the periplasm. NqrA to NqrE are probably involved in the second step, the conversion of ubisemiquinone to ubiquinol. This is Na(+)-translocating NADH-quinone reductase subunit A from Neisseria meningitidis serogroup B (strain ATCC BAA-335 / MC58).